A 470-amino-acid chain; its full sequence is Serine carboxypeptidase ctsa-4.1 (470 aa).

An N-terminal signal peptide occupies residues 1–19 (MKLLSILFIFVSSYSFCLA). N-linked (GlcNAc...) asparagine glycosylation is present at asparagine 132. Serine 169 is a catalytic residue. Residue asparagine 316 is glycosylated (N-linked (GlcNAc...) asparagine). The active site involves aspartate 380. An N-linked (GlcNAc...) asparagine glycan is attached at asparagine 396. Residue histidine 441 is part of the active site.

It belongs to the peptidase S10 family.

It carries out the reaction Release of a C-terminal amino acid with broad specificity.. The chain is Serine carboxypeptidase ctsa-4.1 from Caenorhabditis elegans.